Reading from the N-terminus, the 514-residue chain is Pentatricopeptide repeat-containing protein At4g26800 (514 aa).

11 PPR repeats span residues 122–156 (DLYT…GIEP), 157–191 (DIVT…GIKR), 192–226 (DVVV…GISP), 227–261 (NVVT…KINP), 262–296 (NVIT…SIDP), 297–331 (NVFT…GCTP), 332–366 (NVVT…GVAA), 367–401 (NTVS…GLIP), 402–436 (NIRS…RNDL), 437–471 (DIIT…RVEP), and 472–510 (DFKA…ESAP).

It belongs to the PPR family. P subfamily.

This chain is Pentatricopeptide repeat-containing protein At4g26800, found in Arabidopsis thaliana (Mouse-ear cress).